A 256-amino-acid polypeptide reads, in one-letter code: MHFNSNFKECFNKIAKKVNSLDSEYYEFSSFIERIRTTFGLLIALTVLSNLIIISFVLIWFFTDGFGQLRLLFFTLFIPFFISLLVAIFLIFLNNSFRNFFQINEKNWLFLWTCVFSSLPIFNLWLIVRLNKTIKNFASDYGFKIVNKYNSLTSGIFVFDFADYVSFEANLTNWKNTNDKNRNFVNFFETISKEKTGVVQKPVLNFQRLYVNRLYYQSKLSVGSNQQTPQTAFDNLRNYVENKQRETVRVKQYILT.

3 helical membrane passes run 42–62 (LIALTVLSNLIIISFVLIWFF), 73–93 (FFTLFIPFFISLLVAIFLIFL), and 108–128 (WLFLWTCVFSSLPIFNLWLIV).

It localises to the cell membrane. This is an uncharacterized protein from Mycoplasma genitalium (strain ATCC 33530 / DSM 19775 / NCTC 10195 / G37) (Mycoplasmoides genitalium).